A 118-amino-acid polypeptide reads, in one-letter code: Basic phospholipase A2 4 (118 aa).

7 disulfides stabilise this stretch: C11–C71, C27–C117, C29–C45, C44–C98, C51–C91, C60–C84, and C78–C89. Residues Y28, G30, and G32 each coordinate Ca(2+). Residue H48 is part of the active site. Position 49 (D49) interacts with Ca(2+). Residue D92 is part of the active site.

Belongs to the phospholipase A2 family. Group I subfamily. D49 sub-subfamily. Monomer. Requires Ca(2+) as cofactor. Expressed by the venom gland.

It localises to the secreted. The catalysed reaction is a 1,2-diacyl-sn-glycero-3-phosphocholine + H2O = a 1-acyl-sn-glycero-3-phosphocholine + a fatty acid + H(+). In terms of biological role, PLA2 catalyzes the calcium-dependent hydrolysis of the 2-acyl groups in 3-sn-phosphoglycerides. This is Basic phospholipase A2 4 from Laticauda semifasciata (Black-banded sea krait).